The sequence spans 354 residues: Selection and upkeep of intraepithelial T-cells protein 10 (354 aa).

Positions methionine 1 to serine 52 are cleaved as a signal peptide. An Ig-like V-type domain is found at leucine 53–valine 141. Over leucine 53–lysine 158 the chain is Extracellular. Cysteine 71 and cysteine 125 are joined by a disulfide. The N-linked (GlcNAc...) asparagine glycan is linked to asparagine 129. The helical transmembrane segment at phenylalanine 159–leucine 179 threads the bilayer. Residues aspartate 180 to cysteine 209 are Cytoplasmic-facing. A helical membrane pass occupies residues cysteine 210–leucine 230. The Extracellular portion of the chain corresponds to lysine 231–aspartate 252. A helical transmembrane segment spans residues isoleucine 253 to tryptophan 273. The Cytoplasmic portion of the chain corresponds to threonine 274–threonine 354.

Belongs to the SKINT family. Expressed in skin and thymus.

The protein localises to the membrane. Functionally, may act by engaging a cell surface molecule on immature T-cells in the embryonic thymus. This chain is Selection and upkeep of intraepithelial T-cells protein 10 (Skint10), found in Mus musculus (Mouse).